The chain runs to 284 residues: Bifunctional protein FolD (284 aa).

NADP(+) is bound by residues 165 to 167, Ser190, and Ile231; that span reads GRS.

It belongs to the tetrahydrofolate dehydrogenase/cyclohydrolase family. In terms of assembly, homodimer.

The enzyme catalyses (6R)-5,10-methylene-5,6,7,8-tetrahydrofolate + NADP(+) = (6R)-5,10-methenyltetrahydrofolate + NADPH. The catalysed reaction is (6R)-5,10-methenyltetrahydrofolate + H2O = (6R)-10-formyltetrahydrofolate + H(+). Its pathway is one-carbon metabolism; tetrahydrofolate interconversion. Functionally, catalyzes the oxidation of 5,10-methylenetetrahydrofolate to 5,10-methenyltetrahydrofolate and then the hydrolysis of 5,10-methenyltetrahydrofolate to 10-formyltetrahydrofolate. The polypeptide is Bifunctional protein FolD (Dechloromonas aromatica (strain RCB)).